The chain runs to 252 residues: Probable transcriptional regulatory protein A1E_02520 (252 aa).

Belongs to the TACO1 family.

It is found in the cytoplasm. In Rickettsia canadensis (strain McKiel), this protein is Probable transcriptional regulatory protein A1E_02520.